Consider the following 288-residue polypeptide: 33 kDa chaperonin (288 aa).

Cystine bridges form between cysteine 236–cysteine 238 and cysteine 269–cysteine 272.

It belongs to the HSP33 family. Under oxidizing conditions two disulfide bonds are formed involving the reactive cysteines. Under reducing conditions zinc is bound to the reactive cysteines and the protein is inactive.

The protein resides in the cytoplasm. Functionally, redox regulated molecular chaperone. Protects both thermally unfolding and oxidatively damaged proteins from irreversible aggregation. Plays an important role in the bacterial defense system toward oxidative stress. In Syntrophotalea carbinolica (strain DSM 2380 / NBRC 103641 / GraBd1) (Pelobacter carbinolicus), this protein is 33 kDa chaperonin.